The following is a 374-amino-acid chain: Nucleosome assembly protein 1;1 (374 aa).

The stretch at 26 to 80 forms a coiled coil; it reads VNALKNKLQDITGKPTNVLECLSPNVRKRVEVLKEIQSQHDELEAKFYEERAVLE. The Nuclear export signal motif lies at 47-62; the sequence is LSPNVRKRVEVLKEIQ. A Nuclear localization signal motif is present at residues 223–228; the sequence is KKKPKK. Residues 299–339 are compositionally biased toward acidic residues; sequence AAEDDFADLEDDDDDDEEDDDDEDEEEEDDEDDEDEEDEDD. The interval 299 to 374 is disordered; that stretch reads AAEDDFADLE…GERPPECKQQ (76 aa). Residues 343–355 are compositionally biased toward basic residues; it reads KKKSSAVRKRGVR. At Cys371 the chain carries Cysteine methyl ester. Cys371 is lipidated: S-farnesyl cysteine. Residues 372-374 constitute a propeptide, removed in mature form; the sequence is KQQ.

This sequence belongs to the nucleosome assembly protein (NAP) family. As to quaternary structure, binds preferentially histones H4 and H1 in vitro. Interacts with CYCB1;1.

It localises to the nucleus. The protein localises to the cytoplasm. In terms of biological role, may modulate chromatin structure by regulation of nucleosome assembly/disassembly. Could function together with B-type cyclins in the regulation of microtubule dynamics. The sequence is that of Nucleosome assembly protein 1;1 (NAP1;1) from Nicotiana tabacum (Common tobacco).